The following is a 300-amino-acid chain: ETS homologous factor (300 aa).

The PNT domain maps to 29-115 (STCNVSSGFF…SNLQHLKWNG (87 aa)). The interval 183-202 (ESPDMKKEQDPPAKCHTKKH) is disordered. Residues 185-195 (PDMKKEQDPPA) show a composition bias toward basic and acidic residues. Positions 207 to 289 (THLWEFIRDI…DGRRLVYKFG (83 aa)) form a DNA-binding region, ETS.

The protein belongs to the ETS family.

The protein resides in the nucleus. In terms of biological role, transcriptional activator that may play a role in regulating epithelial cell differentiation and proliferation. May act as a repressor for a specific subset of ETS/AP-1-responsive genes, and as a modulator of the nuclear response to mitogen-activated protein kinase signaling cascades. Binds to DNA sequences containing the consensus nucleotide core sequence GGAA. Involved in regulation of TNFRSF10B/DR5 expression through Ets-binding sequences on the TNFRSF10B/DR5 promoter. In Pan troglodytes (Chimpanzee), this protein is ETS homologous factor (EHF).